The following is a 187-amino-acid chain: Elongation factor P (187 aa).

It belongs to the elongation factor P family.

The protein localises to the cytoplasm. The protein operates within protein biosynthesis; polypeptide chain elongation. Involved in peptide bond synthesis. Stimulates efficient translation and peptide-bond synthesis on native or reconstituted 70S ribosomes in vitro. Probably functions indirectly by altering the affinity of the ribosome for aminoacyl-tRNA, thus increasing their reactivity as acceptors for peptidyl transferase. In Arthrobacter sp. (strain FB24), this protein is Elongation factor P.